The following is a 512-amino-acid chain: Cytochrome P450 82C3 (512 aa).

A helical transmembrane segment spans residues 1-21; that stretch reads MDTSLFSLFVSILVFVFIALF. A heme-binding site is contributed by C451.

Belongs to the cytochrome P450 family. Heme serves as cofactor.

It is found in the membrane. This Arabidopsis thaliana (Mouse-ear cress) protein is Cytochrome P450 82C3 (CYP82C3).